Reading from the N-terminus, the 1749-residue chain is Kinesin-like protein KIF13A (1749 aa).

The Kinesin motor domain occupies 5–352 (KVKVAVRVRP…LRYADRAKRI (348 aa)). 102–109 (GQTGSGKS) provides a ligand contact to ATP. Residues 359-431 (NEDPNAKVIR…QERQRQLESM (73 aa)) are a coiled coil. In terms of domain architecture, FHA spans 469 to 519 (HTRVGADTSQDIQLFGIGIQPEHCEIDIAADGDITLTPKENARSCVNGTLV). Residues 552-775 (LKDFERETSS…VPEAKRLYGK (224 aa)) are a coiled coil. 2 disordered regions span residues 633 to 652 (QQLSPERQPPSSASDRLAYS) and 834 to 853 (IPERMAEDDSSENSSESGSL). The residue at position 636 (serine 636) is a Phosphoserine. Positions 1086 to 1126 (SDALIKRREYLDEQIKKVSNKKEKTEDDMEREARLVEQWVG) form a coiled coil. Serine 1274 carries the post-translational modification Phosphoserine. Positions 1370 to 1383 (LSTPNVHNVSSSRP) are enriched in polar residues. Disordered stretches follow at residues 1370–1402 (LSTPNVHNVSSSRPDLSGFDEDDKGWPENQLDV) and 1417–1436 (TLPRDSPRRSKEGCPSENPH). The span at 1421–1430 (DSPRRSKEGC) shows a compositional bias: basic and acidic residues. Serine 1441, serine 1477, serine 1481, serine 1524, serine 1600, and serine 1650 each carry phosphoserine. Residues 1475–1499 (LLSQEDSEEEENELEALSRKLMLTQ) are a coiled coil. 2 disordered regions span residues 1584–1665 (CAEP…GHQA) and 1698–1749 (DFDG…TATR). A compositionally biased stretch (basic and acidic residues) spans 1719-1741 (ETDHKGIPERPPDADRLHPKIEN).

This sequence belongs to the TRAFAC class myosin-kinesin ATPase superfamily. Kinesin family. Interacts with AP1G1 and AP1G2. Interacts with ZFYVE26. Interacts with AP2B1.

It is found in the golgi apparatus membrane. The protein resides in the cytoplasm. Its subcellular location is the cytoskeleton. The protein localises to the microtubule organizing center. It localises to the centrosome. It is found in the midbody. The protein resides in the endosome membrane. Its function is as follows. Plus end-directed microtubule-dependent motor protein involved in intracellular transport and regulating various processes such as mannose-6-phosphate receptor (M6PR) transport to the plasma membrane, endosomal sorting during melanosome biogenesis and cytokinesis. During melanosome maturation, required for delivering melanogenic enzymes from recycling endosomes to nascent melanosomes by creating peripheral recycling endosomal subdomains in melanocytes. Also required for the abscission step in cytokinesis: mediates translocation of ZFYVE26, and possibly TTC19, to the midbody during cytokinesis. Mediates the transport of M6PR-containing vesicles from trans-Golgi network to the plasma membrane via direct interaction with the AP-1 complex. This Mus musculus (Mouse) protein is Kinesin-like protein KIF13A (Kif13a).